The sequence spans 124 residues: Small ribosomal subunit protein uS12 (124 aa).

3-methylthioaspartic acid is present on Asp-89.

Belongs to the universal ribosomal protein uS12 family. Part of the 30S ribosomal subunit. Contacts proteins S8 and S17. May interact with IF1 in the 30S initiation complex.

Functionally, with S4 and S5 plays an important role in translational accuracy. Its function is as follows. Interacts with and stabilizes bases of the 16S rRNA that are involved in tRNA selection in the A site and with the mRNA backbone. Located at the interface of the 30S and 50S subunits, it traverses the body of the 30S subunit contacting proteins on the other side and probably holding the rRNA structure together. The combined cluster of proteins S8, S12 and S17 appears to hold together the shoulder and platform of the 30S subunit. The polypeptide is Small ribosomal subunit protein uS12 (Buchnera aphidicola subsp. Acyrthosiphon pisum (strain 5A)).